We begin with the raw amino-acid sequence, 132 residues long: Small ribosomal subunit protein uS8 (132 aa).

This sequence belongs to the universal ribosomal protein uS8 family. In terms of assembly, part of the 30S ribosomal subunit. Contacts proteins S5 and S12.

Functionally, one of the primary rRNA binding proteins, it binds directly to 16S rRNA central domain where it helps coordinate assembly of the platform of the 30S subunit. This chain is Small ribosomal subunit protein uS8, found in Streptococcus pneumoniae (strain Taiwan19F-14).